Here is a 527-residue protein sequence, read N- to C-terminus: Transcription factor bHLH157 (527 aa).

2 disordered regions span residues 295 to 318 and 335 to 368; these read SGVN…LFPQ and SSIG…KDRQ. Polar residues predominate over residues 307–318; sequence TSSAHSSSLFPQ. The short motif at 341–348 is the Nuclear localization signal element; it reads WKKPHEEG. Basic and acidic residues predominate over residues 343–368; it reads KPHEEGVKKKRAKAGESRRPRPKDRQ. Residues 354–403 form the bHLH domain; the sequence is AKAGESRRPRPKDRQMIQDRIKELRGMIPNGAKCSIDTLLDLTIKHMVFM.

It belongs to the bHLH protein family. LHW subfamily. In terms of assembly, homodimer.

The protein resides in the nucleus. Transcription factor that may regulate root development. This is Transcription factor bHLH157 (BHLH157) from Arabidopsis thaliana (Mouse-ear cress).